We begin with the raw amino-acid sequence, 307 residues long: Ubiquitin recognition factor in ER-associated degradation protein 1 (307 aa).

At methionine 1 the chain carries N-acetylmethionine. A phosphoserine mark is found at serine 129, serine 231, serine 245, serine 247, and serine 299. Disordered regions lie at residues 231-256 (SGNR…DIKR) and 288-307 (GRFV…GRKP).

The protein belongs to the UFD1 family. Heterodimer with NPLOC4, this heterodimer binds VCP and inhibits Golgi membrane fusion. Interacts with USP13. Interacts with ZFAND2B; probably through VCP. Found in adult heart, skeletal muscle and pancreas, and in fetal liver and kidney.

The protein resides in the nucleus. It is found in the cytoplasm. The protein localises to the cytosol. It participates in protein degradation; proteasomal ubiquitin-dependent pathway. Essential component of the ubiquitin-dependent proteolytic pathway which degrades ubiquitin fusion proteins. The ternary complex containing UFD1, VCP and NPLOC4 binds ubiquitinated proteins and is necessary for the export of misfolded proteins from the ER to the cytoplasm, where they are degraded by the proteasome. The NPLOC4-UFD1-VCP complex regulates spindle disassembly at the end of mitosis and is necessary for the formation of a closed nuclear envelope. It may be involved in the development of some ectoderm-derived structures. Acts as a negative regulator of type I interferon production via the complex formed with VCP and NPLOC4, which binds to RIGI and recruits RNF125 to promote ubiquitination and degradation of RIGI. The polypeptide is Ubiquitin recognition factor in ER-associated degradation protein 1 (Homo sapiens (Human)).